A 655-amino-acid polypeptide reads, in one-letter code: Interferon-induced GTP-binding protein Mx2 (655 aa).

Over residues 1–18 the composition is skewed to polar residues; the sequence is MVLSTEENTGVDSVNLPS. Residues 1–28 form a disordered region; it reads MVLSTEENTGVDSVNLPSGETGLGEKDQ. In terms of domain architecture, Dynamin-type G spans 60–333; that stretch reads DLALPAIAVI…LISHICKSLP (274 aa). Residues 70-77 form a G1 motif region; the sequence is GDQSSGKS. Residue 70–77 participates in GTP binding; the sequence is GDQSSGKS. A G2 motif region spans residues 95 to 97; that stretch reads VTR. Residues 171–174 form a G3 motif region; that stretch reads DLPG. Residues 171–175 and 240–243 contribute to the GTP site; these read DLPGI and TKPD. Positions 240–243 are G4 motif; sequence TKPD. A G5 motif region spans residues 272–275; it reads KCRG. Residues 542 to 562 are disordered; sequence EAEEEKKTKHGTSSSSQSQDL. Positions 552–562 are enriched in low complexity; the sequence is GTSSSSQSQDL. The GED domain maps to 567–655; it reads MAEIFQHLNA…ARRRLAKFPG (89 aa).

It belongs to the TRAFAC class dynamin-like GTPase superfamily. Dynamin/Fzo/YdjA family.

The protein resides in the cytoplasm. In terms of biological role, interferon-induced dynamin-like GTPase with antiviral activity against vesicular stomatitis virus (VSV) and Hantaan virus (HNTV). In Mus musculus (Mouse), this protein is Interferon-induced GTP-binding protein Mx2 (Mx2).